A 507-amino-acid polypeptide reads, in one-letter code: ATP synthase subunit alpha, chloroplastic (507 aa).

Position 170–177 (170–177) interacts with ATP; it reads GDRQTGKT. T257 is modified (phosphothreonine).

This sequence belongs to the ATPase alpha/beta chains family. F-type ATPases have 2 components, CF(1) - the catalytic core - and CF(0) - the membrane proton channel. CF(1) has five subunits: alpha(3), beta(3), gamma(1), delta(1), epsilon(1). CF(0) has four main subunits: a, b, b' and c.

The protein localises to the plastid. The protein resides in the chloroplast thylakoid membrane. The catalysed reaction is ATP + H2O + 4 H(+)(in) = ADP + phosphate + 5 H(+)(out). Its function is as follows. Produces ATP from ADP in the presence of a proton gradient across the membrane. The alpha chain is a regulatory subunit. This Crucihimalaya wallichii (Rock-cress) protein is ATP synthase subunit alpha, chloroplastic.